The sequence spans 236 residues: CHD1 helical C-terminal domain containing protein 1 (236 aa).

The tract at residues 1-29 (MEASDWQGGEGDKPLEKVGSVPCLERSSS) is disordered. Positions 44 to 145 (LSQDTFKICK…TNQTAKFLAA (102 aa)) are CHD1 helical C-terminal domain (CHCT). The disordered stretch occupies residues 197 to 236 (LEEPRSSHCSRGDSLRKLPQKPKLKKKRIKERLESPKSCS). A compositionally biased stretch (basic and acidic residues) spans 198–212 (EEPRSSHCSRGDSLR). Positions 214 to 226 (LPQKPKLKKKRIK) are enriched in basic residues. Basic and acidic residues predominate over residues 227-236 (ERLESPKSCS).

As to expression, exclusively expressed in testes.

The protein resides in the cytoplasm. Its subcellular location is the nucleus. In terms of biological role, may play a role in regulation of apoptosis. The sequence is that of CHD1 helical C-terminal domain containing protein 1 (Chct1) from Mus musculus (Mouse).